A 241-amino-acid chain; its full sequence is Uridylate kinase (241 aa).

11–14 contacts ATP; that stretch reads KFSG. Residues 19–24 are involved in allosteric activation by GTP; it reads GENGFG. Gly-53 is a UMP binding site. ATP-binding residues include Gly-54 and Arg-58. UMP is bound by residues Asp-74 and 135 to 142; that span reads TGNPFFTT. ATP-binding residues include Thr-162, Tyr-168, and Asp-171.

It belongs to the UMP kinase family. In terms of assembly, homohexamer.

It localises to the cytoplasm. The enzyme catalyses UMP + ATP = UDP + ADP. It participates in pyrimidine metabolism; CTP biosynthesis via de novo pathway; UDP from UMP (UMPK route): step 1/1. With respect to regulation, allosterically activated by GTP. Inhibited by UTP. Catalyzes the reversible phosphorylation of UMP to UDP. This is Uridylate kinase from Wolinella succinogenes (strain ATCC 29543 / DSM 1740 / CCUG 13145 / JCM 31913 / LMG 7466 / NCTC 11488 / FDC 602W) (Vibrio succinogenes).